Reading from the N-terminus, the 457-residue chain is Glutamyl-tRNA reductase (457 aa).

Residues 49 to 52 (TCNR), S109, 114 to 116 (ETQ), and Q120 each bind substrate. The active-site Nucleophile is C50. 189 to 194 (GAGKMG) serves as a coordination point for NADP(+).

It belongs to the glutamyl-tRNA reductase family. As to quaternary structure, homodimer.

The enzyme catalyses (S)-4-amino-5-oxopentanoate + tRNA(Glu) + NADP(+) = L-glutamyl-tRNA(Glu) + NADPH + H(+). Its pathway is porphyrin-containing compound metabolism; protoporphyrin-IX biosynthesis; 5-aminolevulinate from L-glutamyl-tRNA(Glu): step 1/2. Catalyzes the NADPH-dependent reduction of glutamyl-tRNA(Glu) to glutamate 1-semialdehyde (GSA). The protein is Glutamyl-tRNA reductase of Oceanobacillus iheyensis (strain DSM 14371 / CIP 107618 / JCM 11309 / KCTC 3954 / HTE831).